The following is a 278-amino-acid chain: Orotidine 5'-phosphate decarboxylase (278 aa).

Lys-95 functions as the Proton donor in the catalytic mechanism.

Belongs to the OMP decarboxylase family. Type 2 subfamily.

It catalyses the reaction orotidine 5'-phosphate + H(+) = UMP + CO2. It functions in the pathway pyrimidine metabolism; UMP biosynthesis via de novo pathway; UMP from orotate: step 2/2. The polypeptide is Orotidine 5'-phosphate decarboxylase (Mycobacterium marinum (strain ATCC BAA-535 / M)).